A 246-amino-acid chain; its full sequence is Complement C1q subcomponent subunit C (246 aa).

An N-terminal signal peptide occupies residues 1-29 (MVVGPSCQPPCGLCLLLLFLLALPLRSQA). Positions 32-113 (GCYGIPGMPG…GPPGEPGVEG (82 aa)) constitute a Collagen-like domain. Pro-37, Pro-40, Pro-43, Pro-46, and Pro-64 each carry 4-hydroxyproline. The segment at 44–116 (GAPGKDGHDG…GEPGVEGRYK (73 aa)) is disordered. The residue at position 76 (Lys-76) is a 5-hydroxylysine. An O-linked (Gal...) hydroxylysine glycan is attached at Lys-76. A 4-hydroxyproline mark is found at Pro-82, Pro-97, Pro-100, and Pro-106. Residues 99–108 (DPGPRGPPGE) are compositionally biased toward pro residues. The 131-residue stretch at 116–246 (KQKHQSVFTV…VFSGFLLFPD (131 aa)) folds into the C1q domain. Cys-180 and Cys-194 are oxidised to a cystine.

As to quaternary structure, core component of the complement C1 complex, a calcium-dependent complex composed of 1 molecule of the C1Q subcomplex, 2 molecules of C1R and 2 molecules of C1S. The C1Q subcomplex is composed 18 subunits: 3 chains of C1QA, C1QB, and C1QC trimerize to form 6 collagen-like triple helices connected to six globular ligand-recognition modules (C1q domain). O-linked glycans consist of Glc-Gal disaccharides bound to the oxygen atom of post-translationally added hydroxyl groups.

It is found in the secreted. The protein resides in the cell surface. The C1Q subcomplex is inhibited by sulfated molecules, such as triterpenoid sulfates, heparan sulfate, or chondroitin sulfates. Its function is as follows. Core component of the complement C1 complex, a multiprotein complex that initiates the classical pathway of the complement system, a cascade of proteins that leads to phagocytosis and breakdown of pathogens and signaling that strengthens the adaptive immune system. The classical complement pathway is initiated by the C1Q subcomplex of the C1 complex, which specifically binds IgG or IgM immunoglobulins complexed with antigens, forming antigen-antibody complexes on the surface of pathogens: C1QA, together with C1QB and C1QC, specifically recognizes and binds the Fc regions of IgG or IgM via its C1q domain. Immunoglobulin-binding activates the proenzyme C1R, which cleaves C1S, initiating the proteolytic cascade of the complement system. The C1Q subcomplex is activated by a hexamer of IgG complexed with antigens, while it is activated by a pentameric IgM. The C1Q subcomplex also recognizes and binds phosphatidylserine exposed on the surface of cells undergoing programmed cell death, possibly promoting activation of the complement system. This Mus musculus (Mouse) protein is Complement C1q subcomponent subunit C.